We begin with the raw amino-acid sequence, 205 residues long: Large ribosomal subunit protein uL4 (205 aa).

A disordered region spans residues 43-95; the sequence is RSGNRAQKDRAEVKHSTKKPWRQKGTGRARAGMTSSPLWRGGGRAFPNSPEEN. Residues 48–57 show a composition bias toward basic and acidic residues; that stretch reads AQKDRAEVKH. The segment covering 58–69 has biased composition (basic residues); that stretch reads STKKPWRQKGTG.

It belongs to the universal ribosomal protein uL4 family. Part of the 50S ribosomal subunit.

In terms of biological role, one of the primary rRNA binding proteins, this protein initially binds near the 5'-end of the 23S rRNA. It is important during the early stages of 50S assembly. It makes multiple contacts with different domains of the 23S rRNA in the assembled 50S subunit and ribosome. Functionally, forms part of the polypeptide exit tunnel. The chain is Large ribosomal subunit protein uL4 from Bordetella pertussis (strain Tohama I / ATCC BAA-589 / NCTC 13251).